The chain runs to 403 residues: Acetate kinase (403 aa).

Asparagine 9 lines the Mg(2+) pocket. Lysine 16 is a binding site for ATP. Arginine 93 is a substrate binding site. Residue aspartate 150 is the Proton donor/acceptor of the active site. Residues 210 to 214, 284 to 286, and 332 to 336 each bind ATP; these read HLGNG, DFR, and GVGEN. Glutamate 388 lines the Mg(2+) pocket.

It belongs to the acetokinase family. Homodimer. It depends on Mg(2+) as a cofactor. The cofactor is Mn(2+).

The protein localises to the cytoplasm. The catalysed reaction is acetate + ATP = acetyl phosphate + ADP. The protein operates within metabolic intermediate biosynthesis; acetyl-CoA biosynthesis; acetyl-CoA from acetate: step 1/2. Functionally, catalyzes the formation of acetyl phosphate from acetate and ATP. Can also catalyze the reverse reaction. In Corynebacterium jeikeium (strain K411), this protein is Acetate kinase.